The primary structure comprises 891 residues: Probable serine/threonine-protein kinase mkcC (891 aa).

Disordered regions lie at residues 24-70 (IELN…TATI), 85-121 (ANNN…APSS), 264-435 (DDPQ…AREK), 495-526 (NSLG…PEVS), and 565-588 (TTAS…DDYD). Low complexity predominate over residues 29–41 (QEEQQQPEQQEQP). Residues 45–58 (EELKDNNEKIKTSE) are compositionally biased toward basic and acidic residues. 5 stretches are compositionally biased toward low complexity: residues 61 to 70 (TTTTTTTATI), 86 to 105 (NNNT…LNNN), 297 to 314 (STSN…TTGK), 322 to 360 (SNSS…SGTS), and 379 to 397 (TTGN…TTSS). Over residues 422–432 (RKRKEQKRSRA) the composition is skewed to basic residues. The span at 495–522 (NSLGSSINKNNSNNTTTTTTTTNTNNKS) shows a compositional bias: low complexity. The Protein kinase domain maps to 616–864 (YKNLKQIGSG…AEQLLKHPWI (249 aa)). ATP is bound by residues 622–630 (IGSGGFGSV) and Lys-645. The active-site Proton acceptor is Asp-735.

The protein belongs to the protein kinase superfamily. STE Ser/Thr protein kinase family. STE20 subfamily. The cofactor is Mg(2+).

It catalyses the reaction L-seryl-[protein] + ATP = O-phospho-L-seryl-[protein] + ADP + H(+). The catalysed reaction is L-threonyl-[protein] + ATP = O-phospho-L-threonyl-[protein] + ADP + H(+). The chain is Probable serine/threonine-protein kinase mkcC from Dictyostelium discoideum (Social amoeba).